Consider the following 130-residue polypeptide: Methylglyoxal synthase (130 aa).

The 130-residue stretch at 1-130 (MSKPRIALIA…DLARNMQDVC (130 aa)) folds into the MGS-like domain. Substrate is bound by residues His11, Lys15, 37–40 (TGTT), and 57–58 (SG). Catalysis depends on Asp63, which acts as the Proton donor/acceptor. Substrate is bound at residue His90.

The protein belongs to the methylglyoxal synthase family.

It carries out the reaction dihydroxyacetone phosphate = methylglyoxal + phosphate. In terms of biological role, catalyzes the formation of methylglyoxal from dihydroxyacetone phosphate. The sequence is that of Methylglyoxal synthase from Burkholderia lata (strain ATCC 17760 / DSM 23089 / LMG 22485 / NCIMB 9086 / R18194 / 383).